A 264-amino-acid polypeptide reads, in one-letter code: MDNYSSLRIGGKQFSSRLMVGTGKYKSTQDMVESLSNSDTEIITVAVRRIKNDQTGDNLLEKINWKKYWMLPNTAGCVNADEAVRIAMLGRELAKLSGQEENNFVKLEVIPDKKYLLPDPIETVKAAEVLIKKGFAVLPYINADPILAKRLEELGCSTVMPLGSPIGSGQGLLNLSNIAIIIENAKVPVIIDAGIGVPSEASQAMELGADGVLINSAIAQAKNPPLMAQAINYGVKAGRQAFLAGRIKKQDFAIASSPEKNISI.

K106 serves as the catalytic Schiff-base intermediate with DXP. 1-deoxy-D-xylulose 5-phosphate contacts are provided by residues G167, 193–194 (AG), and 215–216 (NS).

It belongs to the ThiG family. In terms of assembly, homotetramer. Forms heterodimers with either ThiH or ThiS.

It localises to the cytoplasm. The enzyme catalyses [ThiS sulfur-carrier protein]-C-terminal-Gly-aminoethanethioate + 2-iminoacetate + 1-deoxy-D-xylulose 5-phosphate = [ThiS sulfur-carrier protein]-C-terminal Gly-Gly + 2-[(2R,5Z)-2-carboxy-4-methylthiazol-5(2H)-ylidene]ethyl phosphate + 2 H2O + H(+). It functions in the pathway cofactor biosynthesis; thiamine diphosphate biosynthesis. Functionally, catalyzes the rearrangement of 1-deoxy-D-xylulose 5-phosphate (DXP) to produce the thiazole phosphate moiety of thiamine. Sulfur is provided by the thiocarboxylate moiety of the carrier protein ThiS. In vitro, sulfur can be provided by H(2)S. This Prochlorococcus marinus (strain MIT 9312) protein is Thiazole synthase.